Here is a 154-residue protein sequence, read N- to C-terminus: 6,7-dimethyl-8-ribityllumazine synthase (154 aa).

Residues Phe-22, Ala-56–Glu-58, and Ala-80–Ile-82 each bind 5-amino-6-(D-ribitylamino)uracil. Ala-85–Thr-86 serves as a coordination point for (2S)-2-hydroxy-3-oxobutyl phosphate. His-88 functions as the Proton donor in the catalytic mechanism. Residue Phe-113 participates in 5-amino-6-(D-ribitylamino)uracil binding. Arg-127 serves as a coordination point for (2S)-2-hydroxy-3-oxobutyl phosphate.

This sequence belongs to the DMRL synthase family.

It catalyses the reaction (2S)-2-hydroxy-3-oxobutyl phosphate + 5-amino-6-(D-ribitylamino)uracil = 6,7-dimethyl-8-(1-D-ribityl)lumazine + phosphate + 2 H2O + H(+). It functions in the pathway cofactor biosynthesis; riboflavin biosynthesis; riboflavin from 2-hydroxy-3-oxobutyl phosphate and 5-amino-6-(D-ribitylamino)uracil: step 1/2. In terms of biological role, catalyzes the formation of 6,7-dimethyl-8-ribityllumazine by condensation of 5-amino-6-(D-ribitylamino)uracil with 3,4-dihydroxy-2-butanone 4-phosphate. This is the penultimate step in the biosynthesis of riboflavin. The polypeptide is 6,7-dimethyl-8-ribityllumazine synthase (Clostridium botulinum (strain 657 / Type Ba4)).